The chain runs to 444 residues: Acyl-CoA 6-desaturase (444 aa).

Over 1–122 (MGKGGNQDEG…FRALRKTAED (122 aa)) the chain is Cytoplasmic. Residues 18 to 95 (MPTFRWEEIQ…MKPLLIGELA (78 aa)) form the Cytochrome b5 heme-binding domain. Residues 123–143 (MNLFKSNQLFFLLHLAHIIAM) form a helical membrane-spanning segment. Residues 144–147 (ESIA) lie on the Lumenal side of the membrane. The chain crosses the membrane as a helical span at residues 148 to 168 (WFTLFYFGNGWIPTIITAFVL). Residues 169–264 (ATSQAQAGWL…KYLPYNHQHE (96 aa)) are Cytoplasmic-facing. The Histidine box-1 motif lies at 180-184 (HDYGH). A Histidine box-2 motif is present at residues 217–221 (HFQHH). The chain crosses the membrane as a helical span at residues 265–285 (YFFLIGPPLLIPLYFQYQIIM). The Lumenal portion of the chain corresponds to 286–305 (TMIVRKYWADLAWAISYYTR). The helical transmembrane segment at 306–326 (FFITYIPFYGVLGSILFLNFI) threads the bilayer. The Cytoplasmic segment spans residues 327–444 (RFLESHWFVW…QLWLDAYLHK (118 aa)). A Histidine box-3 motif is present at residues 382–386 (QIEHH).

The protein belongs to the fatty acid desaturase type 1 family.

It is found in the endoplasmic reticulum membrane. It catalyses the reaction (9Z,12Z)-octadecadienoyl-CoA + 2 Fe(II)-[cytochrome b5] + O2 + 2 H(+) = (6Z,9Z,12Z)-octadecatrienoyl-CoA + 2 Fe(III)-[cytochrome b5] + 2 H2O. The catalysed reaction is (9Z,12Z,15Z)-octadecatrienoyl-CoA + 2 Fe(II)-[cytochrome b5] + O2 + 2 H(+) = (6Z,9Z,12Z,15Z)-octadecatetraenoyl-CoA + 2 Fe(III)-[cytochrome b5] + 2 H2O. It carries out the reaction (9Z,12Z,15Z,18Z,21Z)-tetracosapentaenoyl-CoA + 2 Fe(II)-[cytochrome b5] + O2 + 2 H(+) = (6Z,9Z,12Z,15Z,18Z,21Z)-tetracosahexaenoyl-CoA + 2 Fe(III)-[cytochrome b5] + 2 H2O. The enzyme catalyses (11E)-octadecenoyl-CoA + 2 Fe(II)-[cytochrome b5] + O2 + 2 H(+) = (6Z,11E)-octadecadienoyl-CoA + 2 Fe(III)-[cytochrome b5] + 2 H2O. It catalyses the reaction (11Z,14Z)-eicosadienoyl-CoA + 2 Fe(II)-[cytochrome b5] + O2 + 2 H(+) = (8Z,11Z,14Z)-eicosatrienoyl-CoA + 2 Fe(III)-[cytochrome b5] + 2 H2O. The catalysed reaction is (11Z,14Z,17Z)-eicosatrienoyl-CoA + 2 Fe(II)-[cytochrome b5] + O2 + 2 H(+) = (8Z,11Z,14Z,17Z)-eicosatetraenoyl-CoA + 2 Fe(III)-[cytochrome b5] + 2 H2O. The protein operates within lipid metabolism; polyunsaturated fatty acid biosynthesis. Its function is as follows. Involved in the biosynthesis of highly unsaturated fatty acids (HUFA) from the essential polyunsaturated fatty acids (PUFA) linoleic acid (LA) (18:2n-6) and alpha-linolenic acid (ALA) (18:3n-3) precursors, acting as a fatty acyl-coenzyme A (CoA) desaturase that introduces a cis double bond at carbon 6 of the fatty acyl chain. Catalyzes the first and rate limiting step in this pathway which is the desaturation of LA (18:2n-6) and ALA (18:3n-3) into gamma-linoleate (GLA) (18:3n-6) and stearidonate (18:4n-3), respectively. Subsequently, in the biosynthetic pathway of HUFA n-3 series, it desaturates tetracosapentaenoate (24:5n-3) to tetracosahexaenoate (24:6n-3), which is then converted to docosahexaenoate (DHA)(22:6n-3), an important lipid for nervous system function. It can also desaturate (11E)-octadecenoate (trans-vaccenoate, a metabolite in the biohydrogenation pathway of LA and the predominant trans fatty acid in cow milk) at carbon 6 generating (6Z,11E)-octadecadienoate. In addition to Delta-6 activity, this enzyme exhibits Delta-8 activity with slight biases toward n-3 fatty acyl-CoA substrates. This Bos taurus (Bovine) protein is Acyl-CoA 6-desaturase (FADS2).